The sequence spans 426 residues: Dihydroorotase (426 aa).

The Zn(2+) site is built by His58 and His60. Residues 60-62 (HLR) and Asn92 contribute to the substrate site. Zn(2+) is bound by residues Asp150, His177, and His230. Asn276 contributes to the substrate binding site. Asp303 serves as a coordination point for Zn(2+). Asp303 is a catalytic residue. His307 contacts substrate.

Belongs to the metallo-dependent hydrolases superfamily. DHOase family. Class I DHOase subfamily. Requires Zn(2+) as cofactor.

The catalysed reaction is (S)-dihydroorotate + H2O = N-carbamoyl-L-aspartate + H(+). Its pathway is pyrimidine metabolism; UMP biosynthesis via de novo pathway; (S)-dihydroorotate from bicarbonate: step 3/3. In terms of biological role, catalyzes the reversible cyclization of carbamoyl aspartate to dihydroorotate. This is Dihydroorotase from Acetivibrio thermocellus (strain ATCC 27405 / DSM 1237 / JCM 9322 / NBRC 103400 / NCIMB 10682 / NRRL B-4536 / VPI 7372) (Clostridium thermocellum).